A 51-amino-acid chain; its full sequence is Sperm protamine P1 (51 aa).

Cystine bridges form between Cys7/Cys15 and Cys38/Cys48.

This sequence belongs to the protamine P1 family. In terms of assembly, cross-linked by interchain disulfide bonds around the DNA-helix. Post-translationally, phosphorylated by SRPK1. Testis.

The protein localises to the nucleus. The protein resides in the chromosome. Protamines substitute for histones in the chromatin of sperm during the haploid phase of spermatogenesis. They compact sperm DNA into a highly condensed, stable and inactive complex. In Rattus norvegicus (Rat), this protein is Sperm protamine P1 (Prm1).